The chain runs to 685 residues: Potassium-transporting ATPase ATP-binding subunit (685 aa).

4 helical membrane-spanning segments follow: residues 36 to 56 (MFVVEVGFFVTILLTIFPSIF), 68 to 88 (LIVTIILFITVLFANFAESVA), 218 to 238 (IALNTILVSLTLIFLIVLVAL), and 255 to 275 (IALLVCLIPTTIGGLLSAIGI). Asp-306 serves as the catalytic 4-aspartylphosphate intermediate. Residues Asp-343, Glu-347, 375–382 (FTAQTRMS), and Lys-394 each bind ATP. Mg(2+) contacts are provided by Asp-517 and Asp-521. A run of 3 helical transmembrane segments spans residues 587 to 607 (FAIIPAIFTIAIPKMQLMNIM), 615 to 635 (AILSALIFNAIIIPALIPIAM), and 654 to 674 (IVFGFGGIIVPFVGIKIIDMI).

It belongs to the cation transport ATPase (P-type) (TC 3.A.3) family. Type IA subfamily. The system is composed of three essential subunits: KdpA, KdpB and KdpC.

The protein localises to the cell membrane. It carries out the reaction K(+)(out) + ATP + H2O = K(+)(in) + ADP + phosphate + H(+). Functionally, part of the high-affinity ATP-driven potassium transport (or Kdp) system, which catalyzes the hydrolysis of ATP coupled with the electrogenic transport of potassium into the cytoplasm. This subunit is responsible for energy coupling to the transport system and for the release of the potassium ions to the cytoplasm. This Clostridium acetobutylicum (strain ATCC 824 / DSM 792 / JCM 1419 / IAM 19013 / LMG 5710 / NBRC 13948 / NRRL B-527 / VKM B-1787 / 2291 / W) protein is Potassium-transporting ATPase ATP-binding subunit.